A 443-amino-acid polypeptide reads, in one-letter code: Protein FAM83A (443 aa).

The segment at 311 to 403 (DSGVSVMTDS…YYQRNYAPDS (93 aa)) is disordered. The span at 315 to 326 (SVMTDSTPESVN) shows a compositional bias: polar residues. Low complexity-rich tracts occupy residues 327–344 (TTSEPFSSTSTASISNDS) and 388–399 (SNYQPNYYQRNY).

This sequence belongs to the FAM83 family.

The protein resides in the cytoplasm. May function in the epidermal growth factor receptor/EGFR signaling pathway. In Xenopus laevis (African clawed frog), this protein is Protein FAM83A.